A 375-amino-acid polypeptide reads, in one-letter code: CLIP domain-containing serine protease B14 (375 aa).

The N-terminal stretch at 1–24 (MYSRRYVACGLLCLLVIAIDQGHG) is a signal peptide. The region spanning 29–83 (PCTTPNGTAGRCVRVRECGYVLDLLRKDLFAHSDTVHLEGLQCGTRPDGGALVCC) is the Clip domain. 3 disulfides stabilise this stretch: Cys30/Cys82, Cys40/Cys71, and Cys46/Cys83. Residue Asn34 is glycosylated (N-linked (GlcNAc...) asparagine). Residues 101–370 (IIGGNDTELG…YMGWLEREMF (270 aa)) enclose the Peptidase S1 domain. A glycan (N-linked (GlcNAc...) asparagine) is linked at Asn105. Cysteines 131 and 147 form a disulfide. Residues His146 and Asp213 each act as charge relay system in the active site. Residue Asn238 is glycosylated (N-linked (GlcNAc...) asparagine). Intrachain disulfides connect Cys289–Cys307 and Cys317–Cys346. The active-site Charge relay system is Ser321. The N-linked (GlcNAc...) asparagine glycan is linked to Asn357.

It belongs to the peptidase S1 family. CLIP subfamily. Post-translationally, N-glycosylated. Proteolytically cleaved. Expressed by a subpopulation of hemocytes.

Its subcellular location is the secreted. Serine protease. Plays a role in innate immunity against infections by parasite P.berghei and by Gram-negative bacteria such as E.coli. In response to P.berghei infection, contributes to the clearing of parasite ookinetes independent of melanization, an innate immune response which consists in the deposition of melanin pigments on invading pathogens and parasites. May play a role in non-septic wound healing. The sequence is that of CLIP domain-containing serine protease B14 from Anopheles gambiae (African malaria mosquito).